The sequence spans 143 residues: Cofilin/actin-depolymerizing factor homolog 2 (143 aa).

Residues 4-141 form the ADF-H domain; it reads GVKVSDECVY…FEDELRTIIL (138 aa).

Belongs to the actin-binding proteins ADF family. As to quaternary structure, interacts with monomeric actin, does not bind to actin polymers.

The protein localises to the cytoplasm. Its subcellular location is the cytoskeleton. Not involved in actin polymerisation, instead functions to stimulate nucleotide exchange on monomeric actin and influence turnover of the small amount of cytosolic actin microfilaments. Essential for erythrocytic schizogony. This Plasmodium falciparum (isolate 3D7) protein is Cofilin/actin-depolymerizing factor homolog 2.